The sequence spans 223 residues: uncharacterized protein (223 aa).

Positions 5 to 116 (RILIVEDDVM…ELLLRMRNML (112 aa)) constitute a Response regulatory domain. Position 52 is a 4-aspartylphosphate (D52). Residues 121-219 (GTFTQIKHLY…IYGEGYRLNT (99 aa)) constitute a DNA-binding region (ompR/PhoB-type).

Post-translationally, phosphorylated by YbdK.

It is found in the cytoplasm. Member of the two-component regulatory system YbdK/YbdJ. This is an uncharacterized protein from Bacillus subtilis (strain 168).